A 544-amino-acid chain; its full sequence is Protein angel homolog 2 (544 aa).

The protein belongs to the CCR4/nocturin family.

This is Protein angel homolog 2 (ANGEL2) from Bos taurus (Bovine).